A 1132-amino-acid chain; its full sequence is MPEPSKAAPKKEAKKKEEKKEEKKEAPPPQEHKDEAPDDVHPPETPDPEGLFLSKPQNVMVESGRDVTVSARVAGAALPCAPAVKWFKGKWAELGDKSARCRLRHSVDDDKVHTFELTITKVAMGDRGDYRCEVTAKEQKDSCSFSIDVEAPRSSEGNVLQAFKRTGEGKDDTAGELDFSGLLKKREVQVEEKKKKKDEDDQFPPEIWELLKGVTKKSEYERIAFQYGITDLRGMLKRLKKVHVEPKKSEAFIRKLDPAYQVDKGNKIKLVVELSDPDLPLKWYKNGQLLKPSTKYVFENVGLKRILTIHKCSLADDAAYECRVNDEKCFTEVFVKEPPVTVVRGLEDQQVVVGDRVVLEAEVSEEGAQVMWLKDGVDVTRDDAFKYRFKKDGKKHFLIINEAELSDSAHYKIMTNGGESEAELSVEEKQLEVLQDMADLTVKASEQAVFKCEVSDEKVTGRWFRNGVEVKPSKRIHISHNGRFHKLVIDDVRPEDEGDYTFIPDGYALSLSAKLNFLEIKVEYVPKQEPPKIHLDCSGKAAENTIVVVAGNKVRLDVPISGEPAPTVTWKRGDQLFTATEGRVHIDSQADLSSFVIESAERSDEGRYCITVTNPVGEDSATLHVRVVDVPDPPQSVRVTSVGEDWAVLSWEAPPFDGGMPITGYLMERKKKGSMRWMKLNFEVFPDTTYESTKMIEGVFYEMRVFAVNAIGVSQPSLNTQPFMPIAPTSEPTHVVLEDVTDTTATIKWRPPERIGAGGVDGYLVEWCREGSNEWVAANTELVERCGLTARGLPTGERLLFRVISVNMAGKSPPATMAQPVTIREIVERPKIRLPRHLRQTYIRRVGEQVNLVIPFQGKPRPQVTWSREGGALPAEVQTRTSDVDSVFFIRSAARPLSGNYEMRVRIDNMEDCATLRLRVVERPGPPQAVRVMEVWGSNALLQWEPPKDDGNAEISGYTVQKADTRTMEWFTVLEHSRPTRCTVSELVMGNEYRFRVYSENVCGTSQEPATSHNTARIAKEGLTLKMVPYKERDLRAAPQFLTPLVDRSVVAGYTVTLNCAVRGHPKPKVTWLKNSVEIGADPKFLSRHGLGVLSLLIRRPGPFDGGTYGCRAVNEMGEATTECRLDVRVPQ.

The interval 1 to 59 (MPEPSKAAPKKEAKKKEEKKEEKKEAPPPQEHKDEAPDDVHPPETPDPEGLFLSKPQNV) is disordered. A compositionally biased stretch (basic and acidic residues) spans 9–44 (PKKEAKKKEEKKEEKKEAPPPQEHKDEAPDDVHPPE). Ig-like C2-type domains follow at residues 48–149 (PEGL…SIDV), 249–338 (SEAF…VKEP), 339–429 (PVTV…VEEK), 430–530 (QLEV…KQEP), and 531–630 (PKIH…VVDV). 2 consecutive Fibronectin type-III domains span residues 633–729 (PPQS…IAPT) and 731–826 (EPTH…IREI). Residues 830-923 (PKIRLPRHLR…ATLRLRVVER (94 aa)) enclose the Ig-like C2-type 6 domain. One can recognise a Fibronectin type-III 3 domain in the interval 926–1022 (PPQAVRVMEV…HNTARIAKEG (97 aa)). Residues 1039 to 1132 (PQFLTPLVDR…ECRLDVRVPQ (94 aa)) enclose the Ig-like C2-type 7 domain.

It belongs to the immunoglobulin superfamily. MyBP family.

Thick filament-associated protein located in the crossbridge region of vertebrate striated muscle a bands. In vitro it binds MHC, F-actin and native thin filaments, and modifies the activity of actin-activated myosin ATPase. It may modulate muscle contraction or may play a more structural role. This chain is Myosin-binding protein C, fast-type (MYBPC2), found in Gallus gallus (Chicken).